The sequence spans 60 residues: Large ribosomal subunit protein bL32 (60 aa).

The segment covering M1–H20 has biased composition (basic residues). A disordered region spans residues M1–D60. The segment covering I28–L44 has biased composition (basic and acidic residues).

This sequence belongs to the bacterial ribosomal protein bL32 family.

This chain is Large ribosomal subunit protein bL32, found in Caulobacter vibrioides (strain ATCC 19089 / CIP 103742 / CB 15) (Caulobacter crescentus).